Here is a 527-residue protein sequence, read N- to C-terminus: Neutrophil cytosol factor 2 (527 aa).

TPR repeat units follow at residues serine 37–leucine 70, alanine 71–asparagine 104, and cysteine 121–proline 154. A Phosphothreonine modification is found at threonine 233. Residues leucine 240–leucine 299 form the SH3 1 domain. Residues glutamine 304–isoleucine 345 form a disordered region. Position 324 is a phosphoserine (serine 324). Positions lysine 336–isoleucine 345 are enriched in basic and acidic residues. The PB1 domain occupies serine 352 to threonine 430. Serine 400 is subject to Phosphoserine. The segment at glutamine 434–leucine 457 is disordered. The 60-residue stretch at lysine 458–threonine 517 folds into the SH3 2 domain.

It belongs to the NCF2/NOXA1 family. In terms of assembly, component of the phagocyte NADPH oxidase complex composed of an obligatory core heterodimer formed by the membrane proteins CYBA and CYBB and the cytosolic regulatory subunits NCF1/p47-phox, NCF2/p67-phox, NCF4/p40-phox and the small GTPase RAC1 or RAC2. Part of a cytosolic complex composed at least by NCF1, NCF2 and NCF4. Interacts with NCF4. Interacts (via the C-terminal SH3 domain) with NCF1 (via C-terminus). Interacts with SYTL1 and RAC1. May interact with NOXO1. Interacts with S100A8 and calprotectin (S100A8/9). Interacts with GBP7 (via GB1/RHD3-type G domain). Interacts with CYBB; the interaction is enhanced in the presence of GBP7.

It is found in the cytoplasm. Its function is as follows. Subunit of the phagocyte NADPH oxidase complex that mediates the transfer of electrons from cytosolic NADPH to O2 to produce the superoxide anion (O2(-)). In the activated complex, electrons are first transferred from NADPH to flavin adenine dinucleotide (FAD) and subsequently transferred via two heme molecules to molecular oxygen, producing superoxide through an outer-sphere reaction. Activation of the NADPH oxidase complex is initiated by the assembly of cytosolic subunits of the NADPH oxidase complex with the core NADPH oxidase complex to form a complex at the plasma membrane or phagosomal membrane. This activation process is initiated by phosphorylation dependent binding of the cytosolic NCF1/p47-phox subunit to the C-terminus of CYBA/p22-phox. This is Neutrophil cytosol factor 2 from Bos taurus (Bovine).